The chain runs to 304 residues: MFEGFERRLVDVGDVTINCVVGGSGPALLLLHGFPQNLHMWARVAPLLANEYTVVCADLRGYGGSSKPVGAPDHANYSFRAMASDQRELMRTLGFERFHLVGHDRGGRTGHRMALDHPDSVLSLAVLDIIPTYVMFEEVDRFVARAYWHWYFLQQPAPYPEKVIGADPDTFYEGCLFGWGATGADGFDPEQLEEYRKQWRDPAAIHGSCCDYRAGGTIDFELDHGDLGRQVQCPALVFSGSAGLMHSLFEMQVVWAPRLANMRFASLPGGHFFVDRFPDDTARILREFLSDARSGIHQTERRES.

The AB hydrolase-1 domain occupies 26–151; the sequence is PALLLLHGFP…FVARAYWHWY (126 aa). Asp104 functions as the Nucleophile in the catalytic mechanism. Fluoroacetate is bound by residues Arg105, Arg108, His149, Trp150, and Tyr212. His271 serves as the catalytic Proton acceptor.

Belongs to the AB hydrolase superfamily. Epoxide hydrolase family. Homodimer.

It carries out the reaction a haloacetate + H2O = a halide anion + glycolate + H(+). It catalyses the reaction fluoroacetate + H2O = fluoride + glycolate + H(+). Catalyzes the hydrolytic defluorination of fluoroacetate to produce glycolate. Has only very low activity towards chloroacetate and bromoacetate. This Burkholderia sp protein is Fluoroacetate dehalogenase (fac-dex).